The primary structure comprises 469 residues: Aspartyl/glutamyl-tRNA(Asn/Gln) amidotransferase subunit B (469 aa).

The protein belongs to the GatB/GatE family. GatB subfamily. In terms of assembly, heterotrimer of A, B and C subunits.

The catalysed reaction is L-glutamyl-tRNA(Gln) + L-glutamine + ATP + H2O = L-glutaminyl-tRNA(Gln) + L-glutamate + ADP + phosphate + H(+). It carries out the reaction L-aspartyl-tRNA(Asn) + L-glutamine + ATP + H2O = L-asparaginyl-tRNA(Asn) + L-glutamate + ADP + phosphate + 2 H(+). Functionally, allows the formation of correctly charged Asn-tRNA(Asn) or Gln-tRNA(Gln) through the transamidation of misacylated Asp-tRNA(Asn) or Glu-tRNA(Gln) in organisms which lack either or both of asparaginyl-tRNA or glutaminyl-tRNA synthetases. The reaction takes place in the presence of glutamine and ATP through an activated phospho-Asp-tRNA(Asn) or phospho-Glu-tRNA(Gln). The chain is Aspartyl/glutamyl-tRNA(Asn/Gln) amidotransferase subunit B from Methanococcus maripaludis (strain C5 / ATCC BAA-1333).